The following is a 270-amino-acid chain: Putative pyruvate, phosphate dikinase regulatory protein 2 (270 aa).

An ADP-binding site is contributed by 151 to 158; that stretch reads GVSRTSKT.

The protein belongs to the pyruvate, phosphate/water dikinase regulatory protein family. PDRP subfamily.

It carries out the reaction N(tele)-phospho-L-histidyl/L-threonyl-[pyruvate, phosphate dikinase] + ADP = N(tele)-phospho-L-histidyl/O-phospho-L-threonyl-[pyruvate, phosphate dikinase] + AMP + H(+). It catalyses the reaction N(tele)-phospho-L-histidyl/O-phospho-L-threonyl-[pyruvate, phosphate dikinase] + phosphate + H(+) = N(tele)-phospho-L-histidyl/L-threonyl-[pyruvate, phosphate dikinase] + diphosphate. Bifunctional serine/threonine kinase and phosphorylase involved in the regulation of the pyruvate, phosphate dikinase (PPDK) by catalyzing its phosphorylation/dephosphorylation. This is Putative pyruvate, phosphate dikinase regulatory protein 2 from Listeria monocytogenes serovar 1/2a (strain ATCC BAA-679 / EGD-e).